The chain runs to 606 residues: Dihydroxy-acid dehydratase ilvC, mitochondrial (606 aa).

Residue Cys-84 coordinates [2Fe-2S] cluster. Residue Asp-116 participates in Mg(2+) binding. [2Fe-2S] cluster is bound at residue Cys-157. Residue Asp-158 participates in Mg(2+) binding. Cys-232 is a [2Fe-2S] cluster binding site. Glu-485 is a Mg(2+) binding site. Ser-511 functions as the Proton acceptor in the catalytic mechanism.

The protein belongs to the IlvD/Edd family. [2Fe-2S] cluster is required as a cofactor. It depends on Mg(2+) as a cofactor.

It is found in the mitochondrion. The catalysed reaction is (2R)-2,3-dihydroxy-3-methylbutanoate = 3-methyl-2-oxobutanoate + H2O. It catalyses the reaction (2R,3R)-2,3-dihydroxy-3-methylpentanoate = (S)-3-methyl-2-oxopentanoate + H2O. It participates in amino-acid biosynthesis; L-isoleucine biosynthesis; L-isoleucine from 2-oxobutanoate: step 3/4. Its pathway is amino-acid biosynthesis; L-valine biosynthesis; L-valine from pyruvate: step 3/4. Its activity is regulated as follows. DHAD activity is inhibited in dose-dependent manner by 2-hydroxy-3-methylbutyric acid with an IC(50) of about 8 mM. Functionally, dihydroxyacid dehydratase that catalyzes the third step in the common pathway leading to biosynthesis of branched-chain amino acids. Catalyzes the dehydration of (2R,3R)-2,3-dihydroxy-3-methylpentanoate (2,3-dihydroxy-3-methylvalerate) into 2-oxo-3-methylpentanoate (2-oxo-3-methylvalerate) and of (2R)-2,3-dihydroxy-3-methylbutanoate (2,3-dihydroxyisovalerate) into 2-oxo-3-methylbutanoate (2-oxoisovalerate), the penultimate precursor to L-isoleucine and L-valine, respectively. IlvC and the branched-chain amino acid biosynthesis are crucial for virulence and may be a potential target to develop antifungal agents. In Aspergillus fumigatus (strain ATCC MYA-4609 / CBS 101355 / FGSC A1100 / Af293) (Neosartorya fumigata), this protein is Dihydroxy-acid dehydratase ilvC, mitochondrial.